A 367-amino-acid chain; its full sequence is Mitogen-activated protein kinase 12 (367 aa).

Residues 27 to 311 form the Protein kinase domain; that stretch reads YQDLQPVGSG…AAEALTHPYF (285 aa). ATP-binding positions include 33–41 and Lys56; that span reads VGSGAYGAV. Asp153 serves as the catalytic Proton acceptor. Thr183 is subject to Phosphothreonine. Positions 183 to 185 match the TXY motif; the sequence is TGY. Position 185 is a phosphotyrosine (Tyr185).

This sequence belongs to the protein kinase superfamily. CMGC Ser/Thr protein kinase family. MAP kinase subfamily. Monomer. Interacts with the PDZ domain of the syntrophin SNTA1. Interacts with SH3BP5, LIN7C, SCRIB and SYNJ2BP. Interacts with PTPN4; this interaction induces the activation of PTPN4 phosphatase activity. Requires Mg(2+) as cofactor. Post-translationally, dually phosphorylated on Thr-183 and Tyr-185 by MAP2K3/MKK3 and MAP2K6/MKK6, which activates the enzyme. Ubiquitinated. Ubiquitination leads to degradation by the proteasome pathway. In terms of tissue distribution, highly expressed in skeletal muscle. Also expressed in the heart, particularly in cardiac myocytes, lung, thymus and testes.

Its subcellular location is the cytoplasm. It is found in the nucleus. The protein localises to the mitochondrion. It catalyses the reaction L-seryl-[protein] + ATP = O-phospho-L-seryl-[protein] + ADP + H(+). It carries out the reaction L-threonyl-[protein] + ATP = O-phospho-L-threonyl-[protein] + ADP + H(+). Activated by phosphorylation on threonine and tyrosine. MAP2K3/MKK3 and MAP2K6/MKK6 are both essential for the activation of MAPK12 induced by environmental stress, whereas MAP2K6/MKK6 is the major MAPK12 activator in response to TNF-alpha. Functionally, serine/threonine kinase which acts as an essential component of the MAP kinase signal transduction pathway. MAPK12 is one of the four p38 MAPKs which play an important role in the cascades of cellular responses evoked by extracellular stimuli such as pro-inflammatory cytokines or physical stress leading to direct activation of transcription factors such as ELK1 and ATF2. Accordingly, p38 MAPKs phosphorylate a broad range of proteins and it has been estimated that they may have approximately 200 to 300 substrates each. Some of the targets are downstream kinases such as MAPKAPK2, which are activated through phosphorylation and further phosphorylate additional targets. Plays a role in myoblast differentiation and also in the down-regulation of cyclin D1 in response to hypoxia in adrenal cells suggesting MAPK12 may inhibit cell proliferation while promoting differentiation. Phosphorylates DLG1. Following osmotic shock, MAPK12 in the cell nucleus increases its association with nuclear DLG1, thereby causing dissociation of DLG1-SFPQ complexes. This function is independent of its catalytic activity and could affect mRNA processing and/or gene transcription to aid cell adaptation to osmolarity changes in the environment. Regulates UV-induced checkpoint signaling and repair of UV-induced DNA damage and G2 arrest after gamma-radiation exposure. MAPK12 is involved in the regulation of SLC2A1 expression and basal glucose uptake in L6 myotubes; and negatively regulates SLC2A4 expression and contraction-mediated glucose uptake in adult skeletal muscle. C-Jun (JUN) phosphorylation is stimulated by MAPK14 and inhibited by MAPK12, leading to a distinct AP-1 regulation. MAPK12 is required for the normal kinetochore localization of PLK1, prevents chromosomal instability and supports mitotic cell viability. MAPK12-signaling is also positively regulating the expansion of transient amplifying myogenic precursor cells during muscle growth and regeneration. The chain is Mitogen-activated protein kinase 12 (Mapk12) from Mus musculus (Mouse).